The following is a 119-amino-acid chain: Large ribosomal subunit protein uL18 (119 aa).

Belongs to the universal ribosomal protein uL18 family. Part of the 50S ribosomal subunit; part of the 5S rRNA/L5/L18/L25 subcomplex. Contacts the 5S and 23S rRNAs.

This is one of the proteins that bind and probably mediate the attachment of the 5S RNA into the large ribosomal subunit, where it forms part of the central protuberance. The sequence is that of Large ribosomal subunit protein uL18 from Ruegeria sp. (strain TM1040) (Silicibacter sp.).